The sequence spans 338 residues: Inositol 2-dehydrogenase 3 (338 aa).

Belongs to the Gfo/Idh/MocA family. In terms of assembly, homotetramer.

It carries out the reaction myo-inositol + NAD(+) = scyllo-inosose + NADH + H(+). In terms of biological role, involved in the oxidation of myo-inositol (MI) to 2-keto-myo-inositol (2KMI or 2-inosose). This Saccharopolyspora erythraea (strain ATCC 11635 / DSM 40517 / JCM 4748 / NBRC 13426 / NCIMB 8594 / NRRL 2338) protein is Inositol 2-dehydrogenase 3.